Here is a 312-residue protein sequence, read N- to C-terminus: Glycerol 2-dehydrogenase (NADP(+)) (312 aa).

The active-site Proton donor is Tyr56. His112 serves as a coordination point for substrate. Position 220–274 (220–274 (SPLGSTDAPLLKEPVILEIAKKNNVQPGHVVISWHVQRGYVVLPKSVNPDRIKTN)) interacts with NADP(+). Residue Ser306 is modified to Phosphoserine.

The protein belongs to the aldo/keto reductase family.

The protein localises to the cytoplasm. The catalysed reaction is glycerol + NADP(+) = dihydroxyacetone + NADPH + H(+). In terms of biological role, glycerol dehydrogenase involved in glycerol catabolism under microaerobic conditions. Has mRNA binding activity. This chain is Glycerol 2-dehydrogenase (NADP(+)) (GCY1), found in Saccharomyces cerevisiae (strain ATCC 204508 / S288c) (Baker's yeast).